Here is a 76-residue protein sequence, read N- to C-terminus: DNA-directed RNA polymerase subunit Rpo5 (76 aa).

This sequence belongs to the archaeal Rpo5/eukaryotic RPB5 RNA polymerase subunit family. Part of the RNA polymerase complex.

It localises to the cytoplasm. It carries out the reaction RNA(n) + a ribonucleoside 5'-triphosphate = RNA(n+1) + diphosphate. DNA-dependent RNA polymerase (RNAP) catalyzes the transcription of DNA into RNA using the four ribonucleoside triphosphates as substrates. In Archaeoglobus fulgidus (strain ATCC 49558 / DSM 4304 / JCM 9628 / NBRC 100126 / VC-16), this protein is DNA-directed RNA polymerase subunit Rpo5.